The primary structure comprises 654 residues: Acetyl-coenzyme A synthetase (654 aa).

CoA contacts are provided by residues 196 to 199 (RGGK) and threonine 316. ATP is bound by residues 392-394 (GEP), 416-421 (DTWWQT), aspartate 507, and arginine 522. CoA is bound at residue serine 530. Residue arginine 533 participates in ATP binding. The Mg(2+) site is built by valine 544 and valine 549. Lysine 619 carries the post-translational modification N6-acetyllysine.

Belongs to the ATP-dependent AMP-binding enzyme family. Mg(2+) is required as a cofactor. In terms of processing, acetylated. Deacetylation by the SIR2-homolog deacetylase activates the enzyme.

The enzyme catalyses acetate + ATP + CoA = acetyl-CoA + AMP + diphosphate. In terms of biological role, catalyzes the conversion of acetate into acetyl-CoA (AcCoA), an essential intermediate at the junction of anabolic and catabolic pathways. AcsA undergoes a two-step reaction. In the first half reaction, AcsA combines acetate with ATP to form acetyl-adenylate (AcAMP) intermediate. In the second half reaction, it can then transfer the acetyl group from AcAMP to the sulfhydryl group of CoA, forming the product AcCoA. The polypeptide is Acetyl-coenzyme A synthetase (Chromobacterium violaceum (strain ATCC 12472 / DSM 30191 / JCM 1249 / CCUG 213 / NBRC 12614 / NCIMB 9131 / NCTC 9757 / MK)).